The following is a 340-amino-acid chain: tRNA N6-adenosine threonylcarbamoyltransferase (340 aa).

2 residues coordinate Fe cation: His111 and His115. Substrate-binding positions include 133–137 (VVSGG), Asp166, Gly179, Asp183, and Asn273. Asp301 serves as a coordination point for Fe cation.

The protein belongs to the KAE1 / TsaD family. Fe(2+) serves as cofactor.

The protein resides in the cytoplasm. It carries out the reaction L-threonylcarbamoyladenylate + adenosine(37) in tRNA = N(6)-L-threonylcarbamoyladenosine(37) in tRNA + AMP + H(+). Its function is as follows. Required for the formation of a threonylcarbamoyl group on adenosine at position 37 (t(6)A37) in tRNAs that read codons beginning with adenine. Is involved in the transfer of the threonylcarbamoyl moiety of threonylcarbamoyl-AMP (TC-AMP) to the N6 group of A37, together with TsaE and TsaB. TsaD likely plays a direct catalytic role in this reaction. This is tRNA N6-adenosine threonylcarbamoyltransferase from Pelobacter propionicus (strain DSM 2379 / NBRC 103807 / OttBd1).